We begin with the raw amino-acid sequence, 1105 residues long: AP-3 complex subunit beta-1 (1105 aa).

Disordered stretches follow at residues 1–26 and 271–292; these read MSSNSFAYNEQSGGGEAAELGQEATS and KNFYESEEEEEEKEKSSRKKSY. 2 positions are modified to phosphoserine: S276 and S610. The segment at 668–824 is disordered; that stretch reads KKEKPMKKFY…KPQQERHPPS (157 aa). Positions 679-704 are enriched in acidic residues; the sequence is ESEEEEDEDEDEDEEEEEKEDEDENP. Low complexity-rich tracts occupy residues 705-722 and 730-741; these read SDSSSDSESGSGSESGDT and DSSSGQDSETGS. The span at 750–759 shows a compositional bias: basic residues; sequence VAKRNSKTKR. Basic and acidic residues predominate over residues 760–774; sequence KSDSENREKKNENSK. 2 positions are modified to phosphoserine: S761 and S763. Residues 775 to 788 show a composition bias toward low complexity; that stretch reads ASESSSEESSSMED. Residues 789–799 show a composition bias toward acidic residues; it reads SSSESESESGS. Residues 811–824 show a composition bias toward basic and acidic residues; the sequence is AKERKPQQERHPPS.

It belongs to the adaptor complexes large subunit family. Adaptor protein complex 3 (AP-3) is a heterotetramer composed of two large adaptins (delta-type subunit AP3D1 and beta-type subunit AP3B1 or AP3B2), a medium adaptin (mu-type subunit AP3M1 or AP3M2) and a small adaptin (sigma-type subunit APS1 or AP3S2). AP-3 associates with the BLOC-1 complex. Interacts with KIF3A; interaction is direct; interaction is impaired by pyrophosphorylation of AP3B1. In terms of processing, phosphorylated on serine residues. Pyrophosphorylated by 5-diphosphoinositol pentakisphosphate (5-IP7). Pyrophosphorylation impairs interaction with KIF3A. Serine pyrophosphorylation is achieved by Mg(2+)-dependent, but enzyme independent transfer of a beta-phosphate from a inositol pyrophosphate to a pre-phosphorylated serine residue. As to expression, ubiquitously expressed.

It localises to the cytoplasmic vesicle. Its subcellular location is the clathrin-coated vesicle membrane. The protein resides in the golgi apparatus. Its function is as follows. Subunit of non-clathrin- and clathrin-associated adaptor protein complex 3 (AP-3) that plays a role in protein sorting in the late-Golgi/trans-Golgi network (TGN) and/or endosomes. The AP complexes mediate both the recruitment of clathrin to membranes and the recognition of sorting signals within the cytosolic tails of transmembrane cargo molecules. AP-3 appears to be involved in the sorting of a subset of transmembrane proteins targeted to lysosomes and lysosome-related organelles. In concert with the BLOC-1 complex, AP-3 is required to target cargos into vesicles assembled at cell bodies for delivery into neurites and nerve terminals. This is AP-3 complex subunit beta-1 (Ap3b1) from Mus musculus (Mouse).